Here is a 1002-residue protein sequence, read N- to C-terminus: UPF0182 protein Mvan_1814 (1002 aa).

Transmembrane regions (helical) follow at residues 16–36 (VMIAVALAVVVLLLLGPRLVD), 61–81 (LLLFLAVAVVFGAVVFAAMAL), 112–132 (LVGIGVPVAVGLLAGLIAQNY), 174–194 (FAATFLAFIANLLGHYLFGGI), 209–229 (IQLIALVGFLMLLKAVAYWLD), 258–278 (KLILMVIAVICAAAVFSAIVL), and 286–306 (IGVVLLLLSSLIVGAGWPLVV). The tract at residues 891 to 958 (LFGPGADATA…TGPTQLSAGK (68 aa)) is disordered. Residues 893-923 (GPGADATATGPAATEPPAGQAPQPQGNNQPP) show a composition bias toward low complexity. Positions 937–950 (PQQPEVPVAVPPTG) are enriched in pro residues.

The protein belongs to the UPF0182 family.

The protein localises to the cell membrane. This is UPF0182 protein Mvan_1814 from Mycolicibacterium vanbaalenii (strain DSM 7251 / JCM 13017 / BCRC 16820 / KCTC 9966 / NRRL B-24157 / PYR-1) (Mycobacterium vanbaalenii).